We begin with the raw amino-acid sequence, 182 residues long: UPF0397 protein SPH_0594 (182 aa).

Helical transmembrane passes span 10-30, 46-66, 73-93, 109-129, and 148-168; these read VVAV…NIPT, LLSI…GHAI, YGLW…VGLF, ILIF…VLAP, and IVAG…LLLA.

Belongs to the UPF0397 family.

It is found in the cell membrane. This chain is UPF0397 protein SPH_0594, found in Streptococcus pneumoniae (strain Hungary19A-6).